Here is a 108-residue protein sequence, read N- to C-terminus: UPF0060 membrane protein CC_1976 (108 aa).

The next 4 helical transmembrane spans lie at 4 to 24, 27 to 47, 59 to 79, and 85 to 105; these read FAIY…FWAW, LGKS…FALL, AFAA…QVVE, and RWDL…LFGP.

Belongs to the UPF0060 family.

The protein localises to the cell inner membrane. The polypeptide is UPF0060 membrane protein CC_1976 (Caulobacter vibrioides (strain ATCC 19089 / CIP 103742 / CB 15) (Caulobacter crescentus)).